The chain runs to 515 residues: Probable cytochrome P450 6d4 (515 aa).

Cys457 is a binding site for heme.

This sequence belongs to the cytochrome P450 family. Heme serves as cofactor.

It localises to the endoplasmic reticulum membrane. Its subcellular location is the microsome membrane. Functionally, may be involved in the metabolism of insect hormones and in the breakdown of synthetic insecticides. In Drosophila melanogaster (Fruit fly), this protein is Probable cytochrome P450 6d4 (Cyp6d4).